We begin with the raw amino-acid sequence, 556 residues long: TNF receptor-associated factor 6-A (556 aa).

Residues 72–111 (CPICLMALREAVQTPCGHRFCKACILKSLRNAGHKCPVDN) form an RING-type; degenerate zinc finger. 2 TRAF-type zinc fingers span residues 148 to 204 (RHLE…EDKS) and 205 to 261 (GHEL…HNLA). One can recognise an MATH domain in the interval 384-533 (NGVFIWRIKG…NDTLLVRCSV (150 aa)).

The protein belongs to the TNF receptor-associated factor family. A subfamily. Homotrimer. Homooligomer. Interacts with tifa. In terms of tissue distribution, highly expressed in ovary and moderately expressed in kidney, spleen, stomach, colon and testis.

The protein resides in the cytoplasm. Its subcellular location is the cell cortex. The protein localises to the nucleus. It is found in the lipid droplet. The catalysed reaction is S-ubiquitinyl-[E2 ubiquitin-conjugating enzyme]-L-cysteine + [acceptor protein]-L-lysine = [E2 ubiquitin-conjugating enzyme]-L-cysteine + N(6)-ubiquitinyl-[acceptor protein]-L-lysine.. It participates in protein modification; protein ubiquitination. Functionally, E3 ubiquitin ligase that, together with UBE2N and UBE2V1, mediates the synthesis of 'Lys-63'-linked-polyubiquitin chains conjugated to proteins, such as IKBKG, IRAK1, AKT1 and AKT2. Also mediates ubiquitination of free/unanchored polyubiquitin chain that leads to MAP3K7 activation. The protein is TNF receptor-associated factor 6-A (traf6-a) of Xenopus laevis (African clawed frog).